Here is a 442-residue protein sequence, read N- to C-terminus: Kelch domain-containing protein 10 (442 aa).

The tract at residues 1–57 (MSAAQGWDRNRRRGGGAAGAGGGGSGAGGGSGGSGGRGTGQLNRFVQLSGRPHLPGK) is disordered. An Omega-N-methylarginine modification is found at arginine 13. Over residues 15–39 (GGAAGAGGGGSGAGGGSGGSGGRGT) the composition is skewed to gly residues. Kelch repeat units follow at residues 87-154 (RPPP…PREL), 155-198 (ASMS…ALLS), 199-260 (CRGK…PEER), 261-319 (YRHE…RRCH), 320-364 (SCVQ…PEPV), and 365-403 (YFHC…LVVP). The interaction with CUL2 stretch occupies residues 401–442 (VVPSLLELAWEKLLAAFPNLANLSRTQLLHLGLTQGLIERLK).

Belongs to the KLHDC10 family. In terms of assembly, component of a CRL2 E3 ubiquitin-protein ligase complex, also named ECS (Elongin BC-CUL2/5-SOCS-box protein) complex, composed of CUL2, Elongin BC (ELOB and ELOC), RBX1 and substrate-specific adapter KLHDC10. Interacts (via the 6 Kelch repeats) with PPP5C.

It is found in the nucleus. Its subcellular location is the cytoplasm. Its pathway is protein modification; protein ubiquitination. Its function is as follows. Substrate-recognition component of a Cul2-RING (CRL2) E3 ubiquitin-protein ligase complex of the DesCEND (destruction via C-end degrons) pathway, which recognizes a C-degron located at the extreme C-terminus of target proteins, leading to their ubiquitination and degradation. The C-degron recognized by the DesCEND pathway is usually a motif of less than ten residues and can be present in full-length proteins, truncated proteins or proteolytically cleaved forms. The CRL2(KLHDC10) complex specifically recognizes proteins with a proline-glycine (Pro-Gly) or an alanine tail (CAT tail) at the C-terminus, leading to their ubiquitination and degradation. The CRL2(KLHDC10) complex is involved in the ribosome-associated quality control (RQC) pathway, which mediates the extraction of incompletely synthesized nascent chains from stalled ribosomes: CRL2(KLHDC10) acts downstream of NEMF and recognizes CAT tails associated with stalled nascent chains, leading to their ubiquitination and degradation. Participates in the oxidative stress-induced cell death through MAP3K5 activation. Inhibits PPP5C phosphatase activity on MAP3K5. Acts as a regulator of necroptosis. The protein is Kelch domain-containing protein 10 of Homo sapiens (Human).